Here is a 538-residue protein sequence, read N- to C-terminus: CTP synthase (538 aa).

An amidoligase domain region spans residues 1 to 265 (MARYIFVTGG…DLQVLNYFKL (265 aa)). Position 13 (serine 13) interacts with CTP. Serine 13 contacts UTP. ATP contacts are provided by residues 14-19 (SLGKGL) and aspartate 71. Aspartate 71 and glutamate 139 together coordinate Mg(2+). CTP is bound by residues 146–148 (DIE), 186–191 (KTKPTQ), and lysine 222. Residues 186 to 191 (KTKPTQ) and lysine 222 each bind UTP. The region spanning 291-538 (NIAIIGKYVE…SFIKAAKNHK (248 aa)) is the Glutamine amidotransferase type-1 domain. Glycine 353 serves as a coordination point for L-glutamine. Cysteine 380 (nucleophile; for glutamine hydrolysis) is an active-site residue. L-glutamine contacts are provided by residues 381 to 384 (YGMQ), glutamate 404, and arginine 468. Residues histidine 513 and glutamate 515 contribute to the active site.

This sequence belongs to the CTP synthase family. In terms of assembly, homotetramer.

It carries out the reaction UTP + L-glutamine + ATP + H2O = CTP + L-glutamate + ADP + phosphate + 2 H(+). The catalysed reaction is L-glutamine + H2O = L-glutamate + NH4(+). The enzyme catalyses UTP + NH4(+) + ATP = CTP + ADP + phosphate + 2 H(+). The protein operates within pyrimidine metabolism; CTP biosynthesis via de novo pathway; CTP from UDP: step 2/2. Its activity is regulated as follows. Allosterically activated by GTP, when glutamine is the substrate; GTP has no effect on the reaction when ammonia is the substrate. The allosteric effector GTP functions by stabilizing the protein conformation that binds the tetrahedral intermediate(s) formed during glutamine hydrolysis. Inhibited by the product CTP, via allosteric rather than competitive inhibition. Its function is as follows. Catalyzes the ATP-dependent amination of UTP to CTP with either L-glutamine or ammonia as the source of nitrogen. Regulates intracellular CTP levels through interactions with the four ribonucleotide triphosphates. The protein is CTP synthase of Pelagibacter ubique (strain HTCC1062).